A 213-amino-acid polypeptide reads, in one-letter code: Orotate phosphoribosyltransferase (213 aa).

Position 26 (K26) interacts with 5-phospho-alpha-D-ribose 1-diphosphate. 34–35 (FF) is an orotate binding site. Residues 72-73 (YK), R99, K100, K103, H105, and 124-132 (DDVITAGTA) contribute to the 5-phospho-alpha-D-ribose 1-diphosphate site. Orotate-binding residues include T128 and R156.

This sequence belongs to the purine/pyrimidine phosphoribosyltransferase family. PyrE subfamily. Homodimer. Mg(2+) is required as a cofactor.

The catalysed reaction is orotidine 5'-phosphate + diphosphate = orotate + 5-phospho-alpha-D-ribose 1-diphosphate. It functions in the pathway pyrimidine metabolism; UMP biosynthesis via de novo pathway; UMP from orotate: step 1/2. Functionally, catalyzes the transfer of a ribosyl phosphate group from 5-phosphoribose 1-diphosphate to orotate, leading to the formation of orotidine monophosphate (OMP). This is Orotate phosphoribosyltransferase from Salmonella choleraesuis (strain SC-B67).